The primary structure comprises 499 residues: Thermostable carboxypeptidase 1 (499 aa).

A Peptidase M32 domain is found at 6–499 (QNETIKQILA…FVRWVKEKYL (494 aa)). An HPF motif is present at residues 238–240 (HPF). The DXRXT motif lies at 248-252 (DVRIT). His269 provides a ligand contact to Co(2+). An HEXXH motif is present at residues 269-273 (HEFGH). Residue Glu270 is the Proton donor/acceptor of the active site. Residues His273 and Glu299 each coordinate Co(2+). Positions 298–301 (HESQ) match the HES/GQ motif. The short motif at 350–355 (IRTEAD) is the I/NRXXA/SD element. A GXXQDXHW motif is present at residues 405-412 (GILQDIHW).

Belongs to the peptidase M32 family. As to quaternary structure, homodimer. The cofactor is Co(2+). Mn(2+) serves as cofactor.

The enzyme catalyses Release of a C-terminal amino acid with broad specificity, except for -Pro.. Its activity is regulated as follows. EDTA and DTT reversibly abolish carboxypeptidase activity. Its function is as follows. Broad specificity carboxypetidase that releases amino acids sequentially from the C-terminus, including neutral, aromatic, polar and basic residues, but not Pro, Gly, Asp and Glu. In Pyrococcus furiosus (strain ATCC 43587 / DSM 3638 / JCM 8422 / Vc1), this protein is Thermostable carboxypeptidase 1.